The following is a 295-amino-acid chain: Nucleotide-binding protein CMS1991 (295 aa).

Residue 19-26 participates in ATP binding; that stretch reads GMSGAGRS. 70–73 contacts GTP; the sequence is DVRG.

It belongs to the RapZ-like family.

Functionally, displays ATPase and GTPase activities. This is Nucleotide-binding protein CMS1991 from Clavibacter sepedonicus (Clavibacter michiganensis subsp. sepedonicus).